A 329-amino-acid polypeptide reads, in one-letter code: CDP-6-deoxy-L-threo-D-glycero-4-hexulose-3-dehydrase reductase (329 aa).

The 2Fe-2S ferredoxin-type domain maps to 2 to 93 (SLNVKLHPSG…ELDVNYYPEL (92 aa)). Cys-37, Cys-42, Cys-45, and Cys-75 together coordinate [2Fe-2S] cluster. Residues 98–197 (KKTYPCKLDS…EGPQGTFFVR (100 aa)) enclose the FAD-binding FR-type domain.

In terms of assembly, monomer.

Its pathway is nucleotide-sugar biosynthesis; CDP-ascarylose biosynthesis. It participates in bacterial outer membrane biogenesis; lipopolysaccharide biosynthesis. Its function is as follows. Participates in the conversion of CDP-6-deoxy-D-glycero-L-threo-4-hexulose to 3,6-dideoxy-D-glycero-D-glycero-4-hexulose together with CDP-6-deoxy-D-glycero-L-threo-4-hexulose-3-dehydrase (E1) in two consecutive steps. The detailed mechanism of E3 is not yet resolved. The chain is CDP-6-deoxy-L-threo-D-glycero-4-hexulose-3-dehydrase reductase (ascD) from Yersinia pestis.